The primary structure comprises 659 residues: Putative pentatricopeptide repeat-containing protein At3g16890, mitochondrial (659 aa).

The N-terminal 32 residues, 1-32 (MRGFASSASRIATAAAASKSLNASTSVNPKLS), are a transit peptide targeting the mitochondrion. 15 PPR repeats span residues 109–143 (DQSL…GYRI), 144–178 (SDEL…GMKP), 179–213 (STRL…GCKP), 214–248 (DRFT…GNRP), 249–283 (NVFT…KLNP), 284–318 (NEAT…DSNL), 319–353 (QRVG…GYIP), 354–388 (DSST…GVKP), 389–423 (GFNG…GLLS), 424–458 (SVYS…GISP), 459–493 (NLVT…GFKP), 494–528 (DVIT…GIEP), 529–563 (NEIT…GLSP), 564–598 (DLYA…GLKP), and 599–633 (DNFT…GCVP).

Belongs to the PPR family. P subfamily.

It is found in the mitochondrion. In terms of biological role, required for the ubiquinol-cytochrome c oxidoreductase activity of mitochondrial complex III. This Arabidopsis thaliana (Mouse-ear cress) protein is Putative pentatricopeptide repeat-containing protein At3g16890, mitochondrial (PPR40).